A 391-amino-acid chain; its full sequence is Immunoglobulin heavy constant alpha 2 (391 aa).

The Extracellular portion of the chain corresponds to 1 to 357 (ASPTSPKVFP…TPGANLWPTT (357 aa)). 3 consecutive Ig-like domains span residues 6–98 (PKVF…QDVT), 112–207 (PRLS…ANIT), and 215–317 (PEVH…KTID). A disulfide bond links Cys-26 and Cys-85. Residue Asn-47 is glycosylated (N-linked (GlcNAc...) asparagine). Residue Asn-92 is glycosylated (N-linked (GlcNAc...) (complex) asparagine). Disulfide bonds link Cys-110/Cys-167 and Cys-134/Cys-191. An N-linked (GlcNAc...) asparagine glycan is attached at Asn-131. Asn-205 carries an N-linked (GlcNAc...) (complex) asparagine glycan. The cysteines at positions 237 and 300 are disulfide-linked. Asp-327 is a glycosylation site (N-linked (GlcNAc...) (complex) asparagine). The chain crosses the membrane as a helical span at residues 358–379 (ITFLTLFLLSLFYSTALTVTSV). The Cytoplasmic portion of the chain corresponds to 380-391 (RGPSGKREGPQY).

As to quaternary structure, immunoglobulins are composed of two identical heavy chains and two identical light chains; disulfide-linked. Monomeric or polymeric. Part of the secretory IgA (sIgA) complex that consists of two, four or five IgA monomers, and two additional non-Ig polypeptides, namely the JCHAIN and the secretory component (the proteolytic product of PIGR).

Its subcellular location is the secreted. The protein resides in the cell membrane. Functionally, constant region of immunoglobulin heavy chains. Immunoglobulins, also known as antibodies, are membrane-bound or secreted glycoproteins produced by B lymphocytes. In the recognition phase of humoral immunity, the membrane-bound immunoglobulins serve as receptors which, upon binding of a specific antigen, trigger the clonal expansion and differentiation of B lymphocytes into immunoglobulins-secreting plasma cells. Secreted immunoglobulins mediate the effector phase of humoral immunity, which results in the elimination of bound antigens. The antigen binding site is formed by the variable domain of one heavy chain, together with that of its associated light chain. Thus, each immunoglobulin has two antigen binding sites with remarkable affinity for a particular antigen. The variable domains are assembled by a process called V-(D)-J rearrangement and can then be subjected to somatic hypermutations which, after exposure to antigen and selection, allow affinity maturation for a particular antigen. Ig alpha is the major immunoglobulin class in body secretions. This Homo sapiens (Human) protein is Immunoglobulin heavy constant alpha 2.